A 776-amino-acid polypeptide reads, in one-letter code: Serine/threonine-protein kinase-like protein CCR2 (776 aa).

The first 22 residues, 1-22 (MQPNSHIFVIITISSLIITVSA), serve as a signal peptide directing secretion. Residues 23–432 (YGSTGTIAAA…QKEQREVRRL (410 aa)) are Extracellular-facing. Residues asparagine 59, asparagine 92, asparagine 154, asparagine 162, asparagine 205, asparagine 278, asparagine 287, and asparagine 350 are each glycosylated (N-linked (GlcNAc...) asparagine). A TNFR-Cys repeat occupies 341–396 (NCGDGWFAFNASILKESELTSLCSFHNLNICLRCGISCLEGYFPSSTCNPNADRVC). Disulfide bonds link cysteine 342-cysteine 371, cysteine 374-cysteine 388, and cysteine 378-cysteine 396. An N-linked (GlcNAc...) asparagine glycan is attached at asparagine 404. A helical transmembrane segment spans residues 433-453 (VIIIGCSVLGFLVMLIGLSFI). Residues 454–776 (PKMTKGSKRD…DLIVKSGLTF (323 aa)) lie on the Cytoplasmic side of the membrane. The Protein kinase domain maps to 519–776 (FKEFNELGRG…DLIVKSGLTF (258 aa)). Residues 525-533 (LGRGSFGFV) and lysine 547 contribute to the ATP site. The active-site Proton acceptor is aspartate 644.

It belongs to the protein kinase superfamily. Ser/Thr protein kinase family. As to quaternary structure, homodimer. In terms of tissue distribution, expressed in roots, leaves, shoot apical meristems (SAM), and floral buds.

The protein localises to the membrane. The catalysed reaction is L-seryl-[protein] + ATP = O-phospho-L-seryl-[protein] + ADP + H(+). The enzyme catalyses L-threonyl-[protein] + ATP = O-phospho-L-threonyl-[protein] + ADP + H(+). In terms of biological role, serine/threonine-protein kinase with low activity. The polypeptide is Serine/threonine-protein kinase-like protein CCR2 (CCR2) (Arabidopsis thaliana (Mouse-ear cress)).